The following is a 337-amino-acid chain: Serpentine receptor class alpha-17 (337 aa).

Transmembrane regions (helical) follow at residues 28–48, 110–130, 155–175, 197–217, 247–267, and 282–302; these read LNFVFIATVIFLSFYFAGLAI, ELYFYYLTNYFSTYAVFSLTF, IIQLLLSLSTYYVGLYGVPLV, FRTATMVFCIIVTIFIYYLSV, CILIVLQFACIMLSSFGVNYI, and IAPFFPGVTYASLCLPLVIYF.

Belongs to the nematode receptor-like protein sra family.

The protein resides in the membrane. The sequence is that of Serpentine receptor class alpha-17 (sra-17) from Caenorhabditis elegans.